The following is a 158-amino-acid chain: ATP synthase subunit b' (158 aa).

Residues 24–44 form a helical membrane-spanning segment; sequence ATLPLMAVQILVLVFLLNAVF.

The protein belongs to the ATPase B chain family. In terms of assembly, F-type ATPases have 2 components, F(1) - the catalytic core - and F(0) - the membrane proton channel. F(1) has five subunits: alpha(3), beta(3), gamma(1), delta(1), epsilon(1). F(0) has four main subunits: a(1), b(1), b'(1) and c(10-14). The alpha and beta chains form an alternating ring which encloses part of the gamma chain. F(1) is attached to F(0) by a central stalk formed by the gamma and epsilon chains, while a peripheral stalk is formed by the delta, b and b' chains.

The protein localises to the cellular thylakoid membrane. Its function is as follows. F(1)F(0) ATP synthase produces ATP from ADP in the presence of a proton or sodium gradient. F-type ATPases consist of two structural domains, F(1) containing the extramembraneous catalytic core and F(0) containing the membrane proton channel, linked together by a central stalk and a peripheral stalk. During catalysis, ATP synthesis in the catalytic domain of F(1) is coupled via a rotary mechanism of the central stalk subunits to proton translocation. Functionally, component of the F(0) channel, it forms part of the peripheral stalk, linking F(1) to F(0). The b'-subunit is a diverged and duplicated form of b found in plants and photosynthetic bacteria. In Synechococcus elongatus (strain ATCC 33912 / PCC 7942 / FACHB-805) (Anacystis nidulans R2), this protein is ATP synthase subunit b'.